The primary structure comprises 201 residues: Urease accessory protein UreG (201 aa).

A GTP-binding site is contributed by 12–19 (GPVGSGKT).

It belongs to the SIMIBI class G3E GTPase family. UreG subfamily. Homodimer. UreD, UreF and UreG form a complex that acts as a GTP-hydrolysis-dependent molecular chaperone, activating the urease apoprotein by helping to assemble the nickel containing metallocenter of UreC. The UreE protein probably delivers the nickel.

It is found in the cytoplasm. In terms of biological role, facilitates the functional incorporation of the urease nickel metallocenter. This process requires GTP hydrolysis, probably effectuated by UreG. The polypeptide is Urease accessory protein UreG (Dechloromonas aromatica (strain RCB)).